A 145-amino-acid polypeptide reads, in one-letter code: uncharacterized protein (145 aa).

The disordered stretch occupies residues 62 to 145; the sequence is LPSVGGRMTA…QLPQQGGCPG (84 aa). Residues 84–95 are compositionally biased toward pro residues; sequence ASSPEDPPLPHP.

This is an uncharacterized protein from Homo sapiens (Human).